Consider the following 379-residue polypeptide: Cyclic dinucleotide synthase CdnE (379 aa).

Residues Gln-107, Ser-109, Asp-123, and Lys-179 each contribute to the UTP site. Asp-123 provides a ligand contact to Mg(2+). Mg(2+) is bound at residue Asp-193. UTP contacts are provided by Asn-229, Lys-257, and Ser-274. A Pyrimidine specificity motif (R/Q)xW in donor pocket motif is present at residues 328-330 (KIF).

This sequence belongs to the CD-NTase family. E02 subfamily. Mg(2+) serves as cofactor.

The enzyme catalyses 2 UTP = c-di-UMP + 2 diphosphate. It carries out the reaction UTP + ATP = 3',3'-cUAMP + 2 diphosphate. It catalyses the reaction UTP + CTP = cyclic CMP-UMP + 2 diphosphate. Cyclic nucleotide synthase (second messenger synthase) of a CBASS antivirus system. CBASS (cyclic oligonucleotide-based antiphage signaling system) provides immunity against bacteriophage. The CD-NTase protein synthesizes cyclic nucleotides in response to infection; these serve as specific second messenger signals. The signals activate a diverse range of effectors, leading to bacterial cell death and thus abortive phage infection. The effector protein for this system is membrane protein Cap15. A type I-B(UU) CBASS system. Its function is as follows. Cyclic dinucleotide synthase that preferentially catalyzes the synthesis of 3',3'-cyclic UMP-UMP (c-di-UMP) and 3',3'-cyclic UMP-AMP, with minor amounts of 3',3'-cyclic UMP-CMP, which are second messengers for cell signal transduction. Functionally, protects E.coli against phage infection. When the CBASS operon (cap15-cdnE) is introduced in E.coli MG1655 it protects against phages T2, T4, T5, T6, SECPhi4, SECPhi6, SECPhi17, SECPhi18 and SECPhi27, but not against phage T7. The sequence is that of Cyclic dinucleotide synthase CdnE from Yersinia aleksiciae.